Reading from the N-terminus, the 470-residue chain is Uronate isomerase (470 aa).

It belongs to the metallo-dependent hydrolases superfamily. Uronate isomerase family.

It carries out the reaction D-glucuronate = D-fructuronate. The enzyme catalyses aldehydo-D-galacturonate = keto-D-tagaturonate. The protein operates within carbohydrate metabolism; pentose and glucuronate interconversion. This is Uronate isomerase from Escherichia coli O8 (strain IAI1).